A 75-amino-acid polypeptide reads, in one-letter code: UPF0270 protein PSPPH_1506 (75 aa).

This sequence belongs to the UPF0270 family.

In Pseudomonas savastanoi pv. phaseolicola (strain 1448A / Race 6) (Pseudomonas syringae pv. phaseolicola (strain 1448A / Race 6)), this protein is UPF0270 protein PSPPH_1506.